We begin with the raw amino-acid sequence, 141 residues long: 6,7-dimethyl-8-ribityllumazine synthase (141 aa).

5-amino-6-(D-ribitylamino)uracil-binding positions include Phe-11, 42–44 (ALE), and 66–68 (VVI). Residue 71–72 (ET) coordinates (2S)-2-hydroxy-3-oxobutyl phosphate. Residue His-74 is the Proton donor of the active site. Position 98 (Asn-98) interacts with 5-amino-6-(D-ribitylamino)uracil. Arg-112 provides a ligand contact to (2S)-2-hydroxy-3-oxobutyl phosphate.

Belongs to the DMRL synthase family.

It carries out the reaction (2S)-2-hydroxy-3-oxobutyl phosphate + 5-amino-6-(D-ribitylamino)uracil = 6,7-dimethyl-8-(1-D-ribityl)lumazine + phosphate + 2 H2O + H(+). It functions in the pathway cofactor biosynthesis; riboflavin biosynthesis; riboflavin from 2-hydroxy-3-oxobutyl phosphate and 5-amino-6-(D-ribitylamino)uracil: step 1/2. Functionally, catalyzes the formation of 6,7-dimethyl-8-ribityllumazine by condensation of 5-amino-6-(D-ribitylamino)uracil with 3,4-dihydroxy-2-butanone 4-phosphate. This is the penultimate step in the biosynthesis of riboflavin. The polypeptide is 6,7-dimethyl-8-ribityllumazine synthase (Sphingopyxis alaskensis (strain DSM 13593 / LMG 18877 / RB2256) (Sphingomonas alaskensis)).